Here is a 208-residue protein sequence, read N- to C-terminus: Ypt/Rab-type GTPase ypt71 (208 aa).

GTP contacts are provided by residues 17-23 (SGVGKTC), 33-40 (FSREYKAT), Gly66, 124-127 (NQID), and 158-160 (SAK). Residues 37-45 (YKATIGADF) carry the Effector region motif. 2 S-geranylgeranyl cysteine lipidation sites follow: Cys206 and Cys208. Cys208 bears the Cysteine methyl ester mark.

This sequence belongs to the small GTPase superfamily. Rab family.

Its subcellular location is the vacuole membrane. Rab activation is generally mediated by a guanine exchange factor (GEF), while inactivation through hydrolysis of bound GTP is catalyzed by a GTPase activating protein (GAP). Its function is as follows. Ypt/Rab-type GTPases are key regulators of membrane trafficking and intracellular vesicular transport. They act as molecular switches that convert between GTP-bound and GDP-bound states, and regulate virtually all steps of membrane traffic from the formation of the transport vesicle at the donor membrane to its fusion at the target membrane. In the GDP-bound state, Ypt proteins are predominantly cytosolic, solubilized through the interaction with a GDP dissociation inhibitor (GDI). In the GTP-bound state, the proteins are membrane bound and interact with specific effector proteins that select cargo, promote vesicle movement, or verify the correct site of fusion. Act antagonistically to ypt7 in regulating vacuolar morphology, promoting vacuolar fission. The chain is Ypt/Rab-type GTPase ypt71 (ypt71) from Schizosaccharomyces pombe (strain 972 / ATCC 24843) (Fission yeast).